The chain runs to 345 residues: Anthranilate phosphoribosyltransferase (345 aa).

Residues Gly84, 87–88 (GD), Thr92, 94–97 (NVTT), 112–120 (KHGNRSVSS), and Ser124 each bind 5-phospho-alpha-D-ribose 1-diphosphate. An anthranilate-binding site is contributed by Gly84. Thr96 contributes to the Mg(2+) binding site. Residue Asn115 coordinates anthranilate. Arg170 contacts anthranilate. Mg(2+) is bound by residues Asp228 and Glu229.

Belongs to the anthranilate phosphoribosyltransferase family. In terms of assembly, homodimer. The cofactor is Mg(2+).

It catalyses the reaction N-(5-phospho-beta-D-ribosyl)anthranilate + diphosphate = 5-phospho-alpha-D-ribose 1-diphosphate + anthranilate. It participates in amino-acid biosynthesis; L-tryptophan biosynthesis; L-tryptophan from chorismate: step 2/5. In terms of biological role, catalyzes the transfer of the phosphoribosyl group of 5-phosphorylribose-1-pyrophosphate (PRPP) to anthranilate to yield N-(5'-phosphoribosyl)-anthranilate (PRA). The sequence is that of Anthranilate phosphoribosyltransferase from Corynebacterium aurimucosum (strain ATCC 700975 / DSM 44827 / CIP 107346 / CN-1) (Corynebacterium nigricans).